Reading from the N-terminus, the 490-residue chain is Interferon-induced protein with tetratricopeptide repeats 3 (490 aa).

TPR repeat units lie at residues 51 to 84, 94 to 127, 136 to 169, 172 to 206, 207 to 240, 241 to 274, 415 to 448, and 450 to 481; these read ATMYNLLAYIKHLDGNNEAALECLRQAEELIQQE, LVTWGNYAWVYYHLGRLSDAQIYVDKVKQTCKKF, SELDCEEGWTQLKCGRNERAKVCFEKALEEKPNN, FSSGLAIAMYHLDNHPEKQFSTDVLKQAIELSPDN, QYVKVLLGLKLQKMNKEAEGEQFVEEALEKSPCQ, TDVLRSAAKFYRRKGDLDKAIELFQRVLESTPNN, PNYWYLQGLIHKQNGDLLQAAKCYEKELGRLLRD, and PSGIGSIFLSASELEDGSEEMGQGAVSSSPRE. A phosphoserine mark is found at Ser203 and Ser237. The tract at residues 467–490 is disordered; sequence SEEMGQGAVSSSPRELLSNSEQLN. Over residues 474-490 the composition is skewed to polar residues; sequence AVSSSPRELLSNSEQLN. Ser478 carries the post-translational modification Phosphoserine.

Belongs to the IFIT family. Component of an interferon-dependent multiprotein complex, at least composed of IFIT1, IFIT2 and IFIT3. Interacts with IFIT1 and IFIT2. Interacts (via N-terminus) with MAVS, TBK1, TRAF6 and RIGI. Interacts with COPS5. Expression significantly higher in peripheral blood mononuclear cells (PBMCs) and monocytes from systemic lupus erythematosus (SLE) patients than in those from healthy individuals (at protein level). Spleen, lung, leukocytes, lymph nodes, placenta, bone marrow and fetal liver.

It is found in the cytoplasm. The protein resides in the mitochondrion. IFN-induced antiviral protein which acts as an inhibitor of cellular as well as viral processes, cell migration, proliferation, signaling, and viral replication. Enhances MAVS-mediated host antiviral responses by serving as an adapter bridging TBK1 to MAVS which leads to the activation of TBK1 and phosphorylation of IRF3 and phosphorylated IRF3 translocates into nucleus to promote antiviral gene transcription. Exhibits an antiproliferative activity via the up-regulation of cell cycle negative regulators CDKN1A/p21 and CDKN1B/p27. Normally, CDKN1B/p27 turnover is regulated by COPS5, which binds CDKN1B/p27 in the nucleus and exports it to the cytoplasm for ubiquitin-dependent degradation. IFIT3 sequesters COPS5 in the cytoplasm, thereby increasing nuclear CDKN1B/p27 protein levels. Up-regulates CDKN1A/p21 by down-regulating MYC, a repressor of CDKN1A/p21. Can negatively regulate the apoptotic effects of IFIT2. The polypeptide is Interferon-induced protein with tetratricopeptide repeats 3 (IFIT3) (Homo sapiens (Human)).